The following is a 302-amino-acid chain: ATP synthase subunit b 1 (302 aa).

The chain crosses the membrane as a helical span at residues 5-22 (WFTVIAQGINFLLLLWLL). The tract at residues 278-302 (GLPENEGTDNPEANPPHAEAKIPHA) is disordered.

Belongs to the ATPase B chain family. In terms of assembly, F-type ATPases have 2 components, F(1) - the catalytic core - and F(0) - the membrane proton channel. F(1) has five subunits: alpha(3), beta(3), gamma(1), delta(1), epsilon(1). F(0) has three main subunits: a(1), b(2) and c(10-14). The alpha and beta chains form an alternating ring which encloses part of the gamma chain. F(1) is attached to F(0) by a central stalk formed by the gamma and epsilon chains, while a peripheral stalk is formed by the delta and b chains.

It localises to the cell inner membrane. F(1)F(0) ATP synthase produces ATP from ADP in the presence of a proton or sodium gradient. F-type ATPases consist of two structural domains, F(1) containing the extramembraneous catalytic core and F(0) containing the membrane proton channel, linked together by a central stalk and a peripheral stalk. During catalysis, ATP synthesis in the catalytic domain of F(1) is coupled via a rotary mechanism of the central stalk subunits to proton translocation. Its function is as follows. Component of the F(0) channel, it forms part of the peripheral stalk, linking F(1) to F(0). In Pseudoalteromonas atlantica (strain T6c / ATCC BAA-1087), this protein is ATP synthase subunit b 1.